The chain runs to 432 residues: Killer cell immunoglobulin-like receptor 3DL1 (432 aa).

Positions 1-21 are cleaved as a signal peptide; it reads MLLWFLSLVCSGFFLVQRMSA. The Extracellular portion of the chain corresponds to 22–335; that stretch reads HVGSHDKPFL…ADTKTNNYKN (314 aa). 3 Ig-like C2-type domains span residues 42 to 100, 135 to 202, and 238 to 301; these read GQNV…HPQY, GGNV…NSYY, and GETM…FRNA. Residue Asn-44 is glycosylated (N-linked (GlcNAc...) asparagine). The cysteines at positions 49 and 95 are disulfide-linked. A glycan (N-linked (GlcNAc...) asparagine) is linked at Asn-137. 2 cysteine pairs are disulfide-bonded: Cys-142-Cys-195 and Cys-245-Cys-294. N-linked (GlcNAc...) asparagine glycosylation occurs at Asn-300. Residues 336 to 356 traverse the membrane as a helical segment; it reads LHILTGLLVTMVLVVIIIFYS. At 357 to 432 the chain is on the cytoplasmic side; sequence CYFSKQNKSQ…DTIVYMEIMK (76 aa).

Belongs to the immunoglobulin superfamily.

It is found in the cell membrane. Receptor on natural killer (NK) cells. Inhibits the activity of NK cells thus preventing cell lysis. This Mus musculus (Mouse) protein is Killer cell immunoglobulin-like receptor 3DL1 (Kir3dl1).